A 140-amino-acid chain; its full sequence is Cystatin-C (140 aa).

Residues 1-20 form the signal peptide; that stretch reads MASPLRSLLFLLAVLAVAWA. A Secondary area of contact motif is present at residues 75–79; that stretch reads QLVAG. Cystine bridges form between Cys-93–Cys-103 and Cys-117–Cys-137.

It belongs to the cystatin family.

The protein resides in the secreted. As an inhibitor of cysteine proteinases, this protein is thought to serve an important physiological role as a local regulator of this enzyme activity. This Mus musculus (Mouse) protein is Cystatin-C (Cst3).